The primary structure comprises 339 residues: Ferredoxin--NADP reductase (339 aa).

Residues D36, Q44, Y49, V89, F123, D290, and T331 each contribute to the FAD site.

The protein belongs to the ferredoxin--NADP reductase type 2 family. In terms of assembly, homodimer. FAD serves as cofactor.

The catalysed reaction is 2 reduced [2Fe-2S]-[ferredoxin] + NADP(+) + H(+) = 2 oxidized [2Fe-2S]-[ferredoxin] + NADPH. The chain is Ferredoxin--NADP reductase from Acidiphilium cryptum (strain JF-5).